The sequence spans 503 residues: MLKTGGLSPSLCLLSLLLALHSAERSYPPPQRRFEYKLSFKGPRLAVPGAGIPFWSHHGDAIPGLEEVRLVPSMKNRSGAVWSEISVSFPSWEVEMQMRVTGPGRRGALGVAMWYTKDRDQVGSVVEGLASWDGIGIYFDSSSNDVQNGPAIRVLASDGHDLQEQFGDGTVRELGSCLRDFRNRPHPFRARITYWRQRLRVSLSGGLTPNDPEEVCVDVEPLLLAPGGFFGVSAATSTLADDHDVLSFLTFSLRDPGSEEALQPFTEKEQFHLARKLEELKARLALGTREDTILPLNSKAQEEGERFFNLEDTLSRQSQILQALQALSRQMDQAEKQWKQQLGSVVQIRPEGGWNTAKVSTLLYGQRTLIQALQEMREAAAQMASGAQVFYLPVGTKHHFFELDQTLGLLQKDLRDLVKMTAKPPRPSGWLPGFSTCLRTSIFLFFLLIQTVGFFCYMNFRQELDKRLQEYLFTESISLQPALPIPRTIGVLRRQPVSPSMQA.

A signal peptide spans 1 to 25 (MLKTGGLSPSLCLLSLLLALHSAER). At 26-439 (SYPPPQRRFE…WLPGFSTCLR (414 aa)) the chain is on the lumenal side. Residues 32–253 (RRFEYKLSFK…DVLSFLTFSL (222 aa)) form the L-type lectin-like domain. A disulfide bridge links Cys-177 with Cys-216. A helical membrane pass occupies residues 440-460 (TSIFLFFLLIQTVGFFCYMNF). Over 461-503 (RQELDKRLQEYLFTESISLQPALPIPRTIGVLRRQPVSPSMQA) the chain is Cytoplasmic.

In terms of tissue distribution, predominantly expressed in the sublingual salivary gland, in the mucous cells of the acini, but not in the serous cells, nor in the duct system (at protein level). Not detected in the submandilar, nor the parotid glands. Expressed in the mucous glands, but not detected in the serous glands (at protein level). Besides the salivary glands, expressed in the Brunner's glands in the duodenum, but no other mucous or serous glands (at protein level).

The protein resides in the endoplasmic reticulum-Golgi intermediate compartment membrane. The sequence is that of Protein ERGIC-53-like (Lman1l) from Rattus norvegicus (Rat).